Consider the following 283-residue polypeptide: Putative sugar uptake protein BC_0219 (283 aa).

The next 10 helical transmembrane spans lie at 4-21 (LLAL…LVSV), 26-48 (GAYS…MYVF), 52-71 (ALTM…WALG), 84-106 (VSTT…GVIA), 110-132 (WTTT…GVVF), 151-173 (LLTL…WYNI), 178-195 (AILP…VLTS), 208-230 (ALSG…RVGV), 234-253 (FPLS…VFLG), and 260-279 (QLIF…VLLG).

The protein belongs to the GRP transporter (TC 2.A.7.5) family.

It localises to the cell membrane. The sequence is that of Putative sugar uptake protein BC_0219 from Bacillus cereus (strain ATCC 14579 / DSM 31 / CCUG 7414 / JCM 2152 / NBRC 15305 / NCIMB 9373 / NCTC 2599 / NRRL B-3711).